The primary structure comprises 309 residues: Low density lipoprotein receptor adapter protein 1-B (309 aa).

The region spanning 41–195 is the PID domain; the sequence is LLEGMLFHLK…SDGEGASSSQ (155 aa). Residues 179 to 201 form a disordered region; that stretch reads DKREKSGSDGEGASSSQSDGSSS. Low complexity predominate over residues 189 to 201; sequence EGASSSQSDGSSS. Residues 213 to 217 carry the Clathrin box motif; that stretch reads LLDFE. Residues 250–277 form an AP-2 complex binding region; sequence WELDDGLDEAFARLAESRTNPQVLDIGL. The [DE]-X(1,2)-F-X-X-[FL]-X-X-X-R motif motif lies at 258 to 267; the sequence is EAFARLAESR.

As to quaternary structure, interacts (via PID domain) with ldlr (via NPXY motif). Binds to soluble clathrin trimers and to the adapter protein complex 2 (AP-2, beta 2 subunit). Binds to phosphoinositides, which regulate clathrin bud assembly at the cell surface. Interacts with the VLDL receptor (vldlr). Interacts with the vitellogenin receptor. As to expression, expressed at high level during oogenesis and embryogenesis. Found at low level in the adult liver and spleen. Found at very low level in testis and heart. Not found in the oocyte vegetal cortex.

Its subcellular location is the cytoplasm. Its function is as follows. Adapter protein (clathrin-associated sorting protein (CLASP)) required for efficient endocytosis of the LDL receptor (LDLR). Also involved in the vitellogenin receptor mediated endocytosis of nutrients during oogenesis. This is Low density lipoprotein receptor adapter protein 1-B from Xenopus laevis (African clawed frog).